A 258-amino-acid polypeptide reads, in one-letter code: 2-oxo-tetronate isomerase (258 aa).

Glu143 (proton donor/acceptor) is an active-site residue. Glu143, Asp178, Gln204, and Glu240 together coordinate Mg(2+). Glu240 functions as the Proton donor/acceptor in the catalytic mechanism.

Belongs to the hyi family. OtnI subfamily.

The enzyme catalyses 2-dehydro-L-erythronate = 3-dehydro-L-erythronate. It catalyses the reaction 2-dehydro-D-erythronate = 3-dehydro-D-erythronate. Catalyzes the isomerization of 2-oxo-tetronate to 3-oxo-tetronate. This chain is 2-oxo-tetronate isomerase, found in Haemophilus influenzae (strain ATCC 51907 / DSM 11121 / KW20 / Rd).